The chain runs to 426 residues: Glutamyl-tRNA reductase (426 aa).

Residues 49-52 (TCNR), Ser109, 114-116 (EGQ), and Gln120 contribute to the substrate site. Cys50 (nucleophile) is an active-site residue. Residue 189–194 (GAGETG) coordinates NADP(+).

Belongs to the glutamyl-tRNA reductase family. In terms of assembly, homodimer.

It carries out the reaction (S)-4-amino-5-oxopentanoate + tRNA(Glu) + NADP(+) = L-glutamyl-tRNA(Glu) + NADPH + H(+). The protein operates within porphyrin-containing compound metabolism; protoporphyrin-IX biosynthesis; 5-aminolevulinate from L-glutamyl-tRNA(Glu): step 1/2. It participates in porphyrin-containing compound metabolism; chlorophyll biosynthesis. Catalyzes the NADPH-dependent reduction of glutamyl-tRNA(Glu) to glutamate 1-semialdehyde (GSA). This Prosthecochloris aestuarii (strain DSM 271 / SK 413) protein is Glutamyl-tRNA reductase.